Consider the following 83-residue polypeptide: Short neurotoxin II (83 aa).

Positions M1 to T21 are cleaved as a signal peptide. 4 disulfide bridges follow: C24/C45, C38/C62, C64/C75, and C76/C81.

This sequence belongs to the three-finger toxin family. Short-chain subfamily. Type I alpha-neurotoxin sub-subfamily. In terms of tissue distribution, expressed by the venom gland.

It is found in the secreted. Its function is as follows. Binds to muscle nicotinic acetylcholine receptor (nAChR) and inhibit acetylcholine from binding to the receptor, thereby impairing neuromuscular transmission. This Laticauda colubrina (Yellow-lipped sea krait) protein is Short neurotoxin II.